Consider the following 465-residue polypeptide: Sodium-dependent phosphate transport protein 1 (465 aa).

N-linked (GlcNAc...) asparagine glycosylation is found at asparagine 47 and asparagine 56. The next 10 helical transmembrane spans lie at glycine 79–isoleucine 99, isoleucine 109–valine 129, methionine 171–cysteine 191, methionine 198–tyrosine 218, alanine 255–threonine 275, leucine 304–methionine 324, leucine 337–serine 357, threonine 363–isoleucine 383, valine 399–leucine 419, and phenylalanine 428–phenylalanine 448.

It belongs to the major facilitator superfamily. Sodium/anion cotransporter family. In terms of assembly, interacts with PDZK1. In terms of tissue distribution, kidney cortex and liver.

The protein resides in the apical cell membrane. It carries out the reaction 3 Na(+)(out) + phosphate(out) = 3 Na(+)(in) + phosphate(in). The enzyme catalyses urate(out) = urate(in). Functionally, important for the resorption of phosphate by the kidney. May be involved in actively transporting phosphate into cells via Na(+) cotransport in the renal brush border membrane. Plays a role in urate transport in the kidney. This is Sodium-dependent phosphate transport protein 1 (SLC17A1) from Oryctolagus cuniculus (Rabbit).